Consider the following 447-residue polypeptide: MMNMKEDKKNTMDMTNMKHHDERKKLNSSQGKNEIIFPEVAESKKDNNGYKNYTLKAQKGKTEFYKNNFSNTLGYNGNLLGPTLKLKKGDKVKIKLINNLDENTTFHWHGLEVNGKVDGGPSQVIKPGKEKTIKFEVNQDSATLWYHPHPSPNTAKQVYNGLSGLLYIEDSKKNNYPSNYGKNDLPIIIQDKTFVSKKLNYSKTKDEDGTQGDTVLVNGIVNPKLTAKEEKIRLRLLNGSNARDLNLKLSNNQSFEYIASDGGQLKNAKKLKEINLAPSERKEIVIDLSKMKGEKVSLVDNDKTVILPISNKEKSSNKSNTPKVSKKIKLEGMNDNVTINGNKFDPNRIDFTQKLNQKEVWEIENVKDKMGGMKHPFHIHGTQFKVLSVDGEKPPKDMRGKKDVISLEPGQKAKIEVVFKNTGTYMFHCHILEHEDNGMMGQIKVTN.

A compositionally biased stretch (basic and acidic residues) spans 1 to 25; that stretch reads MMNMKEDKKNTMDMTNMKHHDERKK. Positions 1–29 are disordered; it reads MMNMKEDKKNTMDMTNMKHHDERKKLNSS. Positions 107, 109, 147, 149, 375, 378, 380, 428, 429, 430, 434, and 439 each coordinate Cu cation.

It belongs to the multicopper oxidase family. Cu cation is required as a cofactor.

It localises to the cytoplasm. May be involved in copper homeostasis and oxidative stress response. This Staphylococcus haemolyticus (strain JCSC1435) protein is Multicopper oxidase mco (mco).